Reading from the N-terminus, the 229-residue chain is Echinolectin 1 (229 aa).

N-linked (GlcNAc...) asparagine glycosylation is present at asparagine 94.

The protein localises to the secreted. The chain is Echinolectin 1 from Echinometra lucunter (Rock-boring urchin).